A 342-amino-acid chain; its full sequence is MTNILSPEKSENDQELPIRPSYLQEFVGQQQIKENLSVFIKAAKSRNEHLDHTLFYGPPGLGKTTLAKIISNEIGGNFKSTSGPAILKVADLAAILTNLEKNDVLFIDEIHRLNTAIEEVLYPAMEDFELDIIIGEGSAARSVKITLPKFTLIGATTRLGLLSNPLRDRFGIPMRLNFYNTEELKKVLNRASKLLDIDLTDSGSEEIAKRSRGTPRIALRLLRRIRDFAAVDGKSRVDKEISDFGLNRLEVDCIGLDSNDYRYLKFIADNYNGGPVGIETIAAALSEQRDALEETIEPYLIQIGLLQRTPRGRVITIAAFEHLKMPVPNQSHHQFNIFNENE.

Positions 1-179 (MTNILSPEKS…FGIPMRLNFY (179 aa)) are large ATPase domain (RuvB-L). ATP is bound by residues Ile18, Arg19, Gly60, Lys63, Thr64, Thr65, 126–128 (EDF), Arg169, Tyr179, and Arg216. Residue Thr64 coordinates Mg(2+). The tract at residues 180 to 250 (NTEELKKVLN…ISDFGLNRLE (71 aa)) is small ATPAse domain (RuvB-S). The interval 253-342 (CIGLDSNDYR…HQFNIFNENE (90 aa)) is head domain (RuvB-H). 3 residues coordinate DNA: Arg289, Arg308, and Arg313.

The protein belongs to the RuvB family. As to quaternary structure, homohexamer. Forms an RuvA(8)-RuvB(12)-Holliday junction (HJ) complex. HJ DNA is sandwiched between 2 RuvA tetramers; dsDNA enters through RuvA and exits via RuvB. An RuvB hexamer assembles on each DNA strand where it exits the tetramer. Each RuvB hexamer is contacted by two RuvA subunits (via domain III) on 2 adjacent RuvB subunits; this complex drives branch migration. In the full resolvosome a probable DNA-RuvA(4)-RuvB(12)-RuvC(2) complex forms which resolves the HJ.

It localises to the cytoplasm. The enzyme catalyses ATP + H2O = ADP + phosphate + H(+). Its function is as follows. The RuvA-RuvB-RuvC complex processes Holliday junction (HJ) DNA during genetic recombination and DNA repair, while the RuvA-RuvB complex plays an important role in the rescue of blocked DNA replication forks via replication fork reversal (RFR). RuvA specifically binds to HJ cruciform DNA, conferring on it an open structure. The RuvB hexamer acts as an ATP-dependent pump, pulling dsDNA into and through the RuvAB complex. RuvB forms 2 homohexamers on either side of HJ DNA bound by 1 or 2 RuvA tetramers; 4 subunits per hexamer contact DNA at a time. Coordinated motions by a converter formed by DNA-disengaged RuvB subunits stimulates ATP hydrolysis and nucleotide exchange. Immobilization of the converter enables RuvB to convert the ATP-contained energy into a lever motion, pulling 2 nucleotides of DNA out of the RuvA tetramer per ATP hydrolyzed, thus driving DNA branch migration. The RuvB motors rotate together with the DNA substrate, which together with the progressing nucleotide cycle form the mechanistic basis for DNA recombination by continuous HJ branch migration. Branch migration allows RuvC to scan DNA until it finds its consensus sequence, where it cleaves and resolves cruciform DNA. The polypeptide is Holliday junction branch migration complex subunit RuvB (Rickettsia africae (strain ESF-5)).